Reading from the N-terminus, the 138-residue chain is Large ribosomal subunit protein uL16 (138 aa).

Basic residues predominate over residues 1 to 17 (MLIPRRVKHRKQHHPTR). Positions 1–24 (MLIPRRVKHRKQHHPTRRGAASGG) are disordered.

The protein belongs to the universal ribosomal protein uL16 family. In terms of assembly, part of the 50S ribosomal subunit.

In terms of biological role, binds 23S rRNA and is also seen to make contacts with the A and possibly P site tRNAs. The polypeptide is Large ribosomal subunit protein uL16 (Kineococcus radiotolerans (strain ATCC BAA-149 / DSM 14245 / SRS30216)).